Here is a 251-residue protein sequence, read N- to C-terminus: Small ribosomal subunit protein uS2 (251 aa).

Ser2 carries the N-acetylserine modification. Positions 209–251 (EIEQQTAEEAAQEAGEEEAKEEVTEEQTEAAEWAQENADNVEW) are disordered. Residues 218–237 (AAQEAGEEEAKEEVTEEQTE) show a composition bias toward acidic residues. The span at 238–251 (AAEWAQENADNVEW) shows a compositional bias: low complexity.

This sequence belongs to the universal ribosomal protein uS2 family. In terms of assembly, component of the small ribosomal subunit. Mature ribosomes consist of a small (40S) and a large (60S) subunit. The 40S subunit contains about 33 different proteins and 1 molecule of RNA (18S). The 60S subunit contains about 49 different proteins and 3 molecules of RNA (25S, 5.8S and 5S). Interacts with RPS21.

The protein resides in the cytoplasm. In terms of biological role, required for the assembly and/or stability of the 40S ribosomal subunit. Required for the processing of the 20S rRNA-precursor to mature 18S rRNA in a late step of the maturation of 40S ribosomal subunits. This Candida glabrata (strain ATCC 2001 / BCRC 20586 / JCM 3761 / NBRC 0622 / NRRL Y-65 / CBS 138) (Yeast) protein is Small ribosomal subunit protein uS2.